The sequence spans 93 residues: Acylphosphatase (93 aa).

Residues 5–93 (TAILRVTGFV…EDRKTFDIVY (89 aa)) form the Acylphosphatase-like domain. Catalysis depends on residues R20 and N38.

Belongs to the acylphosphatase family.

It catalyses the reaction an acyl phosphate + H2O = a carboxylate + phosphate + H(+). The polypeptide is Acylphosphatase (acyP) (Listeria welshimeri serovar 6b (strain ATCC 35897 / DSM 20650 / CCUG 15529 / CIP 8149 / NCTC 11857 / SLCC 5334 / V8)).